The primary structure comprises 559 residues: Endoglin (559 aa).

The signal sequence occupies residues 1–20 (MKSICCVLVLCLLLCRRSTA). Residues 21–473 (SESICELKDV…SCFEFGLSAV (453 aa)) are Extracellular-facing. 2 cysteine pairs are disulfide-bonded: cysteine 25–cysteine 201 and cysteine 47–cysteine 174. Residues asparagine 55, asparagine 79, asparagine 109, asparagine 133, asparagine 170, asparagine 302, and asparagine 352 are each glycosylated (N-linked (GlcNAc...) asparagine). Cysteines 381 and 427 form a disulfide. A helical transmembrane segment spans residues 474 to 494 (LGIAFGGFLIGVLLTGALWFI). The Cytoplasmic portion of the chain corresponds to 495-559 (KIRTGHPVAL…TQSTPTSSMA (65 aa)). Residues 528–559 (RQPVPTHPSPSENSSANASIGSTQSTPTSSMA) are disordered. Low complexity predominate over residues 536–546 (SPSENSSANAS). Positions 547-559 (IGSTQSTPTSSMA) are enriched in polar residues.

As to quaternary structure, homodimer; disulfide-linked.

It is found in the cell membrane. Functionally, vascular endothelium glycoprotein that plays an important role in the regulation of angiogenesis. Required for normal structure and integrity of adult vasculature. Important for endothelial cell shape changes in response to blood flow, which drive vascular remodeling and establishment of normal vascular morphology during angiogenesis. In Danio rerio (Zebrafish), this protein is Endoglin.